Reading from the N-terminus, the 278-residue chain is Envelope glycoprotein L (278 aa).

An N-terminal signal peptide occupies residues 1-30 (MCRRPDCGFSFSPGPVVLLWCCLLLPIVSS). The 214-residue stretch at 43 to 256 (VPAECPELTR…DKYYAGLPPE (214 aa)) folds into the gL betaherpesvirus-type domain. Cys154 and Cys159 form a disulfide bridge.

This sequence belongs to the herpesviridae glycoprotein L (gL) family. Betaherpesvirinae gL subfamily. Interacts with glycoprotein H (gH); this interaction is necessary for the correct processing and cell surface expression of gH. Forms the envelope pentamer complex (PC) composed of gH, gL, UL128, UL130, and UL131A. The pentamer interacts with host NRP2. Forms the envelope trimer complex composed of gH, gL, and gO. The trimer interacts with host PDGFRA.

The protein resides in the virion membrane. The protein localises to the host cell membrane. Its subcellular location is the host Golgi apparatus. It is found in the host trans-Golgi network. The heterodimer glycoprotein H-glycoprotein L is required for the fusion of viral and plasma membranes leading to virus entry into the host cell. Acts as a functional inhibitor of gH and maintains gH in an inhibited form. Upon binding to host integrins, gL dissociates from gH leading to activation of the viral fusion glycoproteins gB and gH. In human cytomegalovirus, forms two distincts complexes to mediate viral entry, a trimer and a pentamer at the surface of the virion envelope. The gH-gL-gO trimer is required for infection in fibroblasts by interacting with host PDGFRA. The gH-gL-UL128-UL130-UL131A pentamer is essential for viral entry in epithelial, endothelial and myeloid cells via interaction with host NRP2. The polypeptide is Envelope glycoprotein L (Human cytomegalovirus (strain AD169) (HHV-5)).